A 49-amino-acid chain; its full sequence is uncharacterized protein (49 aa).

Residues 8–28 (FFLFSSGVLQATTLLLVILIF) traverse the membrane as a helical segment.

The protein localises to the cell membrane. This is an uncharacterized protein from Bacillus subtilis (strain 168).